Consider the following 119-residue polypeptide: Large ribosomal subunit protein bL20 (119 aa).

This sequence belongs to the bacterial ribosomal protein bL20 family.

Its function is as follows. Binds directly to 23S ribosomal RNA and is necessary for the in vitro assembly process of the 50S ribosomal subunit. It is not involved in the protein synthesizing functions of that subunit. The polypeptide is Large ribosomal subunit protein bL20 (Rhodopseudomonas palustris (strain BisA53)).